A 267-amino-acid chain; its full sequence is Undecaprenyl-diphosphatase (267 aa).

The next 8 membrane-spanning stretches (helical) occupy residues 1-21 (MSYFEAFILALIQGLTEFLPI), 39-59 (QGLAFDVAVHVGTLMAVVIYF), 83-103 (AKLAWMIVIATIPACVFGLLM), 111-131 (LRSAYVIATTTIVFGLLLWWV), 144-164 (TGWKKAVFIGIAQALAMIPGT), 189-209 (FLMSIPIITLAGSYLGMKLVT), 218-238 (FLLTGILTSFISAYICIHFFL), and 245-265 (GMTPFVIYRLILGVGLFAFLL).

Belongs to the UppP family.

It is found in the cell inner membrane. It carries out the reaction di-trans,octa-cis-undecaprenyl diphosphate + H2O = di-trans,octa-cis-undecaprenyl phosphate + phosphate + H(+). Functionally, catalyzes the dephosphorylation of undecaprenyl diphosphate (UPP). Confers resistance to bacitracin. This is Undecaprenyl-diphosphatase from Vibrio parahaemolyticus serotype O3:K6 (strain RIMD 2210633).